The following is a 216-amino-acid chain: Octanoyltransferase (216 aa).

One can recognise a BPL/LPL catalytic domain in the interval 31–205 (STTRDEVWLV…ELVTLLDYEQ (175 aa)). Residues 70-77 (RGGQVTYH), 137-139 (SLG), and 150-152 (GLA) each bind substrate. Residue cysteine 168 is the Acyl-thioester intermediate of the active site.

It belongs to the LipB family.

The protein localises to the cytoplasm. The enzyme catalyses octanoyl-[ACP] + L-lysyl-[protein] = N(6)-octanoyl-L-lysyl-[protein] + holo-[ACP] + H(+). It functions in the pathway protein modification; protein lipoylation via endogenous pathway; protein N(6)-(lipoyl)lysine from octanoyl-[acyl-carrier-protein]: step 1/2. Catalyzes the transfer of endogenously produced octanoic acid from octanoyl-acyl-carrier-protein onto the lipoyl domains of lipoate-dependent enzymes. Lipoyl-ACP can also act as a substrate although octanoyl-ACP is likely to be the physiological substrate. In Vibrio cholerae serotype O1 (strain ATCC 39315 / El Tor Inaba N16961), this protein is Octanoyltransferase.